Here is a 1183-residue protein sequence, read N- to C-terminus: DNA-directed RNA polymerase subunit beta (1183 aa).

A disordered region spans residues 1155–1183 (ADVDEDDVNEHKVNIQQSSIPESQKETTD).

The protein belongs to the RNA polymerase beta chain family. As to quaternary structure, the RNAP catalytic core consists of 2 alpha, 1 beta, 1 beta' and 1 omega subunit. When a sigma factor is associated with the core the holoenzyme is formed, which can initiate transcription.

It catalyses the reaction RNA(n) + a ribonucleoside 5'-triphosphate = RNA(n+1) + diphosphate. Functionally, DNA-dependent RNA polymerase catalyzes the transcription of DNA into RNA using the four ribonucleoside triphosphates as substrates. The protein is DNA-directed RNA polymerase subunit beta of Staphylococcus carnosus (strain TM300).